The following is a 313-amino-acid chain: Alpha-S1-casein (313 aa).

Residues 1-15 (MKLLILTCLVAAAFA) form the signal peptide. The segment covering 77-96 (ASEEQAMASAQEDSSISSSS) has biased composition (low complexity). Positions 77–111 (ASEEQAMASAQEDSSISSSSEESEEAIPNITEQKN) are disordered. Ser90, Ser91, Ser93, Ser94, Ser95, and Ser96 each carry phosphoserine. 15 consecutive repeat copies span residues 135 to 140 (LLQKAS), 141 to 146 (LAKQAS), 147 to 152 (LFQQPS), 153 to 158 (LVQQAS), 159 to 164 (LFQQPS), 165 to 170 (LLQQAS), 171 to 176 (LFQQPS), 177 to 182 (MAQQAS), 183 to 188 (LLQQLL), 189 to 194 (LAQQPS), 195 to 200 (LALQVS), 201 to 206 (PAQQSS), 207 to 212 (LVQQAF), 213 to 218 (LAQQAS), and 219 to 224 (LAQKHH). Residues 135 to 224 (LLQKASLAKQ…QQASLAQKHH (90 aa)) are 15 X 6 AA tandem repeats.

The protein belongs to the alpha-casein family. As to expression, mammary gland specific. Secreted in milk.

The protein localises to the secreted. Its function is as follows. Important role in the capacity of milk to transport calcium phosphate. The protein is Alpha-S1-casein (Csn1s1) of Mus musculus (Mouse).